We begin with the raw amino-acid sequence, 211 residues long: Large ribosomal subunit protein uL3 (211 aa).

The interval 116 to 142 (GTSGVMKKHGFSGNRASHGVSRNHRLG) is disordered.

Belongs to the universal ribosomal protein uL3 family. In terms of assembly, part of the 50S ribosomal subunit. Forms a cluster with proteins L14 and L19.

Its function is as follows. One of the primary rRNA binding proteins, it binds directly near the 3'-end of the 23S rRNA, where it nucleates assembly of the 50S subunit. This Fusobacterium nucleatum subsp. nucleatum (strain ATCC 25586 / DSM 15643 / BCRC 10681 / CIP 101130 / JCM 8532 / KCTC 2640 / LMG 13131 / VPI 4355) protein is Large ribosomal subunit protein uL3.